Reading from the N-terminus, the 484-residue chain is Bifunctional protein HldE (484 aa).

The ribokinase stretch occupies residues 1–320 (MDFSSITVLC…AELNAQDADA (320 aa)). 195–198 (NARE) provides a ligand contact to ATP. Asp265 is an active-site residue. A cytidylyltransferase region spans residues 349–484 (FTNGCFDIIH…RIRAAGAADR (136 aa)).

The protein in the N-terminal section; belongs to the carbohydrate kinase PfkB family. In the C-terminal section; belongs to the cytidylyltransferase family. In terms of assembly, homodimer.

The enzyme catalyses D-glycero-beta-D-manno-heptose 7-phosphate + ATP = D-glycero-beta-D-manno-heptose 1,7-bisphosphate + ADP + H(+). The catalysed reaction is D-glycero-beta-D-manno-heptose 1-phosphate + ATP + H(+) = ADP-D-glycero-beta-D-manno-heptose + diphosphate. The protein operates within nucleotide-sugar biosynthesis; ADP-L-glycero-beta-D-manno-heptose biosynthesis; ADP-L-glycero-beta-D-manno-heptose from D-glycero-beta-D-manno-heptose 7-phosphate: step 1/4. Its pathway is nucleotide-sugar biosynthesis; ADP-L-glycero-beta-D-manno-heptose biosynthesis; ADP-L-glycero-beta-D-manno-heptose from D-glycero-beta-D-manno-heptose 7-phosphate: step 3/4. Functionally, catalyzes the phosphorylation of D-glycero-D-manno-heptose 7-phosphate at the C-1 position to selectively form D-glycero-beta-D-manno-heptose-1,7-bisphosphate. In terms of biological role, catalyzes the ADP transfer from ATP to D-glycero-beta-D-manno-heptose 1-phosphate, yielding ADP-D-glycero-beta-D-manno-heptose. This is Bifunctional protein HldE from Gluconacetobacter diazotrophicus (strain ATCC 49037 / DSM 5601 / CCUG 37298 / CIP 103539 / LMG 7603 / PAl5).